Reading from the N-terminus, the 293-residue chain is Bifunctional protein FolD (293 aa).

Residues 164–166, Ser193, and Thr234 contribute to the NADP(+) site; that span reads GRS.

This sequence belongs to the tetrahydrofolate dehydrogenase/cyclohydrolase family. In terms of assembly, homodimer.

The catalysed reaction is (6R)-5,10-methylene-5,6,7,8-tetrahydrofolate + NADP(+) = (6R)-5,10-methenyltetrahydrofolate + NADPH. It carries out the reaction (6R)-5,10-methenyltetrahydrofolate + H2O = (6R)-10-formyltetrahydrofolate + H(+). The protein operates within one-carbon metabolism; tetrahydrofolate interconversion. Its function is as follows. Catalyzes the oxidation of 5,10-methylenetetrahydrofolate to 5,10-methenyltetrahydrofolate and then the hydrolysis of 5,10-methenyltetrahydrofolate to 10-formyltetrahydrofolate. The sequence is that of Bifunctional protein FolD from Bacteroides thetaiotaomicron (strain ATCC 29148 / DSM 2079 / JCM 5827 / CCUG 10774 / NCTC 10582 / VPI-5482 / E50).